A 213-amino-acid polypeptide reads, in one-letter code: MRKMMSTMALTLGAAVFLAFAAATAQAQRCGEQGSNMECPNNLCCSQYGYCGMGGDYCGKGCQNGACWTSKRCGSQAGGATCPNNHCCSQYGHCGFGAEYCGAGCQGGPCRADIKCGSQSGGKLCPNNLCCSQWGFCGLGSEFCGGGCQSGACSTDKPCGKDAGGRVCTNNYCCSKWGSCGIGPGYCGAGCQSGGCDAVFAGAITANSTLLAE.

Residues 1–27 (MRKMMSTMALTLGAAVFLAFAAATAQA) form the signal peptide. Position 28 is a pyrrolidone carboxylic acid (Q28). Chitin-binding type-1 domains are found at residues 28-69 (QRCG…ACWT), 70-112 (SKRC…PCRA), 113-155 (DIKC…ACST), and 156-198 (DKPC…GCDA). Cystine bridges form between C30–C45, C39–C51, C44–C58, C62–C67, C73–C88, C82–C94, C87–C101, C105–C110, C116–C131, C125–C137, C130–C144, C148–C153, C159–C174, C168–C180, C173–C187, and C191–C196. 37 to 39 (MEC) is a binding site for substrate. 89–100 (SQYGHCGFGAEY) is a binding site for substrate. A substrate-binding site is contributed by 141–142 (SE). The propeptide occupies 199–213 (VFAGAITANSTLLAE).

As to quaternary structure, homodimer, u-shaped.

N-acetyl-D-glucosamine / N-acetyl-D-neuraminic acid binding lectin. In Triticum aestivum (Wheat), this protein is Agglutinin isolectin 2.